Consider the following 418-residue polypeptide: Tyrosine--tRNA ligase (418 aa).

Residue Tyr38 coordinates L-tyrosine. A 'HIGH' region motif is present at residues 43-52; that stretch reads CTAKSLHVGS. Positions 175 and 179 each coordinate L-tyrosine. The short motif at 235–239 is the 'KMSKS' region element; it reads KMGKT. Lys238 is a binding site for ATP. The 66-residue stretch at 348 to 413 folds into the S4 RNA-binding domain; it reads LPIIKLLQIS…CGKKRHLKIM (66 aa).

The protein belongs to the class-I aminoacyl-tRNA synthetase family. TyrS type 1 subfamily. In terms of assembly, homodimer.

It is found in the cytoplasm. The catalysed reaction is tRNA(Tyr) + L-tyrosine + ATP = L-tyrosyl-tRNA(Tyr) + AMP + diphosphate + H(+). Its function is as follows. Catalyzes the attachment of tyrosine to tRNA(Tyr) in a two-step reaction: tyrosine is first activated by ATP to form Tyr-AMP and then transferred to the acceptor end of tRNA(Tyr). This is Tyrosine--tRNA ligase from Ehrlichia canis (strain Jake).